Reading from the N-terminus, the 457-residue chain is Siroheme synthase (457 aa).

The interval 1 to 204 (MDHLPIFCQL…ADEKAVNATT (204 aa)) is precorrin-2 dehydrogenase /sirohydrochlorin ferrochelatase. Residues 22–23 (DV) and 43–44 (LT) each bind NAD(+). Position 128 is a phosphoserine (Ser-128). The interval 216–457 (GEVVLVGAGP…RDKLNWFSNY (242 aa)) is uroporphyrinogen-III C-methyltransferase. Pro-225 lines the S-adenosyl-L-methionine pocket. Residue Asp-248 is the Proton acceptor of the active site. Lys-270 acts as the Proton donor in catalysis. Residues 301–303 (GGD), Ile-306, 331–332 (TA), Met-382, and Gly-411 contribute to the S-adenosyl-L-methionine site.

In the N-terminal section; belongs to the precorrin-2 dehydrogenase / sirohydrochlorin ferrochelatase family. The protein in the C-terminal section; belongs to the precorrin methyltransferase family.

It carries out the reaction uroporphyrinogen III + 2 S-adenosyl-L-methionine = precorrin-2 + 2 S-adenosyl-L-homocysteine + H(+). The enzyme catalyses precorrin-2 + NAD(+) = sirohydrochlorin + NADH + 2 H(+). The catalysed reaction is siroheme + 2 H(+) = sirohydrochlorin + Fe(2+). It participates in cofactor biosynthesis; adenosylcobalamin biosynthesis; precorrin-2 from uroporphyrinogen III: step 1/1. The protein operates within cofactor biosynthesis; adenosylcobalamin biosynthesis; sirohydrochlorin from precorrin-2: step 1/1. Its pathway is porphyrin-containing compound metabolism; siroheme biosynthesis; precorrin-2 from uroporphyrinogen III: step 1/1. It functions in the pathway porphyrin-containing compound metabolism; siroheme biosynthesis; siroheme from sirohydrochlorin: step 1/1. It participates in porphyrin-containing compound metabolism; siroheme biosynthesis; sirohydrochlorin from precorrin-2: step 1/1. In terms of biological role, multifunctional enzyme that catalyzes the SAM-dependent methylations of uroporphyrinogen III at position C-2 and C-7 to form precorrin-2 via precorrin-1. Then it catalyzes the NAD-dependent ring dehydrogenation of precorrin-2 to yield sirohydrochlorin. Finally, it catalyzes the ferrochelation of sirohydrochlorin to yield siroheme. In Salmonella choleraesuis (strain SC-B67), this protein is Siroheme synthase.